The following is a 347-amino-acid chain: Extracellular metalloprotease (347 aa).

An N-terminal signal peptide occupies residues 1–20 (MKSRPICSVIPPYILHRIIA). The interval 43–68 (SHHPRPEPHEKLPAGQANRSIHDAEQ) is disordered. His162 contributes to the Zn(2+) binding site. Glu163 is an active-site residue. The Zn(2+) site is built by His166 and Glu186. Catalysis depends on His264, which acts as the Proton donor.

Belongs to the peptidase M4 family. Requires Ca(2+) as cofactor. The cofactor is Zn(2+).

Its subcellular location is the secreted. This chain is Extracellular metalloprotease (prt1), found in Pectobacterium carotovorum subsp. carotovorum (Erwinia carotovora subsp. carotovora).